The primary structure comprises 102 residues: Small ribosomal subunit protein uS10 (102 aa).

The protein belongs to the universal ribosomal protein uS10 family. Part of the 30S ribosomal subunit.

Involved in the binding of tRNA to the ribosomes. The polypeptide is Small ribosomal subunit protein uS10 (Myxococcus xanthus (strain DK1622)).